Consider the following 443-residue polypeptide: tRNA-2-methylthio-N(6)-dimethylallyladenosine synthase (443 aa).

The region spanning Ser3–Arg120 is the MTTase N-terminal domain. [4Fe-4S] cluster is bound by residues Cys12, Cys49, Cys83, Cys157, Cys161, and Cys164. A Radical SAM core domain is found at Arg143–Ala375. Residues Gln378–Asp441 form the TRAM domain.

Belongs to the methylthiotransferase family. MiaB subfamily. Monomer. [4Fe-4S] cluster is required as a cofactor.

The protein localises to the cytoplasm. The catalysed reaction is N(6)-dimethylallyladenosine(37) in tRNA + (sulfur carrier)-SH + AH2 + 2 S-adenosyl-L-methionine = 2-methylsulfanyl-N(6)-dimethylallyladenosine(37) in tRNA + (sulfur carrier)-H + 5'-deoxyadenosine + L-methionine + A + S-adenosyl-L-homocysteine + 2 H(+). Catalyzes the methylthiolation of N6-(dimethylallyl)adenosine (i(6)A), leading to the formation of 2-methylthio-N6-(dimethylallyl)adenosine (ms(2)i(6)A) at position 37 in tRNAs that read codons beginning with uridine. This is tRNA-2-methylthio-N(6)-dimethylallyladenosine synthase from Nitrosomonas europaea (strain ATCC 19718 / CIP 103999 / KCTC 2705 / NBRC 14298).